Here is a 142-residue protein sequence, read N- to C-terminus: HTH-type transcriptional regulator MntR (142 aa).

Residues 1-63 enclose the HTH dtxR-type domain; the sequence is MPTPSMEDYI…YEKYRGLILT (63 aa). Positions 8, 11, 77, 99, 102, and 103 each coordinate Mn(2+).

It belongs to the DtxR/MntR family. As to quaternary structure, homodimer.

The protein resides in the cytoplasm. With respect to regulation, DNA binding is strongly activated by Mn(2+). In terms of biological role, central regulator of manganese homeostasis. In Listeria monocytogenes serotype 4b (strain CLIP80459), this protein is HTH-type transcriptional regulator MntR.